The sequence spans 276 residues: MAAGFKTVEPLEYYRRFLKENCRPDGRELGEFRATTVNIGSISTADGSALVKLGNTTVICGVKAEFAAPPVDAPDRGYVVPNVDLPPLCSSRFRTGPPGEEAQVTSQFIADVVDNSQVIKKEDLCISPGKLAWVLYCDLICLDYDGNILDACTFALLAALKNVQLPEVTINEETALAEVNLKKKSYLNVRTNPVATSFAVFDDTLLIVDPTGEEEHLSTGTLTVVTDEDGKLCCLHKPGGSGLTGAKLQDCMSRAVTRHKEVSKLLDEVIQSMRHK.

N-acetylalanine is present on Ala-2.

The protein belongs to the RNase PH family. Component of the RNA exosome core complex (Exo-9), composed of EXOSC1, EXOSC2, EXOSC3, EXOSC4, EXOSC5, EXOSC6, EXOSC7, EXOSC8 and EXOSC9; within the complex interacts with EXOSC5 and EXOSC6. The catalytically inactive RNA exosome core complex (Exo-9) associates with the catalytic subunit EXOSC10/RRP6. Exo-9 may associate with DIS3 to form the nucleolar exosome complex, or DIS3L to form the cytoplasmic exosome complex. Exo-9 is formed by a hexameric base ring consisting of the heterodimers EXOSC4-EXOSC9, EXOSC5-EXOSC8 and EXOSC6-EXOSC7, and a cap ring consisting of EXOSC1, EXOSC2 and EXOSC3. The RNA exosome complex associates with cofactors C1D/RRP47, MPHOSPH6/MPP6 and MTREX/MTR4.

It localises to the cytoplasm. The protein localises to the nucleus. It is found in the nucleolus. Functionally, non-catalytic component of the RNA exosome complex which has 3'-&gt;5' exoribonuclease activity and participates in a multitude of cellular RNA processing and degradation events. In the nucleus, the RNA exosome complex is involved in proper maturation of stable RNA species such as rRNA, snRNA and snoRNA, in the elimination of RNA processing by-products and non-coding 'pervasive' transcripts, such as antisense RNA species and promoter-upstream transcripts (PROMPTs), and of mRNAs with processing defects, thereby limiting or excluding their export to the cytoplasm. The RNA exosome may be involved in Ig class switch recombination (CSR) and/or Ig variable region somatic hypermutation (SHM) by targeting AICDA deamination activity to transcribed dsDNA substrates. In the cytoplasm, the RNA exosome complex is involved in general mRNA turnover and specifically degrades inherently unstable mRNAs containing AU-rich elements (AREs) within their 3' untranslated regions, and in RNA surveillance pathways, preventing translation of aberrant mRNAs. It seems to be involved in degradation of histone mRNA. The catalytic inactive RNA exosome core complex of 9 subunits (Exo-9) is proposed to play a pivotal role in the binding and presentation of RNA for ribonucleolysis, and to serve as a scaffold for the association with catalytic subunits and accessory proteins or complexes. EXOSC8 binds to ARE-containing RNAs. In Mus musculus (Mouse), this protein is Exosome complex component RRP43 (Exosc8).